We begin with the raw amino-acid sequence, 1493 residues long: Mitogen-activated protein kinase kinase kinase 1 (1493 aa).

Low complexity-rich tracts occupy residues 1-23 (MAAA…ASPE) and 33-42 (GSGAPAAGAG). Disordered regions lie at residues 1 to 171 (MAAA…DRPE) and 222 to 295 (LQGE…EETS). A2 carries the post-translational modification N-acetylalanine. S21 bears the Phosphoserine mark. The segment covering 84 to 94 (PPCPSTSPSPE) has biased composition (pro residues). Low complexity-rich tracts occupy residues 95–108 (PADA…FQPA) and 135–151 (ARSP…APSG). S137 carries the post-translational modification Phosphoserine. The span at 152-171 (REMENKETLKGLHKMDDRPE) shows a compositional bias: basic and acidic residues. A compositionally biased stretch (low complexity) spans 230–257 (SAAPAPKGRRSPSPGSSPSGRSGKPESP). At S265 the chain carries Phosphoserine. Position 275 is a phosphothreonine (T275). Phosphoserine is present on residues S282, S287, and S290. Residues 328–356 (YRVFIGPQNCSCGRGTFCIHLLFVMLRVF) form an SWIM-type zinc finger. The RING-type zinc-finger motif lies at 433–482 (CPICLLGMLDEESLTVCEDGCRNKLHHHCMSIWAEECRRNREPLICPLCR). Polar residues predominate over residues 496 to 506 (SSPVDSPTSLR). Disordered stretches follow at residues 496-524 (SSPV…SQRR), 866-910 (DTLD…LSAS), 923-955 (VGLP…SPLS), and 992-1060 (PCKI…ASKN). A phosphoserine mark is found at S497, S521, and S910. The segment covering 507–522 (GVQQPSSPQQPVAGSQ) has biased composition (low complexity). Composition is skewed to polar residues over residues 925–940 (LPSS…TVQT) and 998–1014 (ASPQ…QRTC). S999 and S1024 each carry phosphoserine. Polar residues predominate over residues 1049 to 1060 (GSTSKLGDASKN). In terms of domain architecture, Protein kinase spans 1224–1489 (WLKGQQIGLG…SRELLKHPVF (266 aa)). ATP-binding positions include 1230–1238 (IGLGAFSSC) and K1253. D1350 functions as the Proton acceptor in the catalytic mechanism. Phosphothreonine; by autocatalysis is present on residues T1381 and T1393.

Belongs to the protein kinase superfamily. STE Ser/Thr protein kinase family. MAP kinase kinase kinase subfamily. As to quaternary structure, binds both upstream activators and downstream substrates in multimolecular complexes through its N-terminus. Oligomerizes after binding MAP4K2 or TRAF2. Interacts (via the kinase catalytic domain) with STK38. Interacts with GRIPAP1. It depends on Mg(2+) as a cofactor. In terms of processing, autophosphorylated. In terms of tissue distribution, most highly expressed in spleen, kidney and lung.

Its subcellular location is the membrane. It catalyses the reaction L-seryl-[protein] + ATP = O-phospho-L-seryl-[protein] + ADP + H(+). It carries out the reaction L-threonyl-[protein] + ATP = O-phospho-L-threonyl-[protein] + ADP + H(+). With respect to regulation, activated by autophosphorylation on Thr-1381 and Thr-1393 following oligomerization. Its function is as follows. Component of a protein kinase signal transduction cascade. Activates the ERK and JNK kinase pathways by phosphorylation of MAP2K1 and MAP2K4. May phosphorylate the MAPK8/JNK1 kinase. Activates CHUK and IKBKB, the central protein kinases of the NF-kappa-B pathway. This is Mitogen-activated protein kinase kinase kinase 1 (Map3k1) from Rattus norvegicus (Rat).